Reading from the N-terminus, the 90-residue chain is Major envelope protein (90 aa).

The chain crosses the membrane as a helical span at residues 53–70 (AVSVVSWAVAAGLIGELI).

The protein localises to the virion membrane. In terms of biological role, essential for membrane formation. This chain is Major envelope protein (P9), found in Pseudomonas savastanoi pv. phaseolicola (Pseudomonas syringae pv. phaseolicola).